A 365-amino-acid chain; its full sequence is Heme A synthase (365 aa).

8 helical membrane-spanning segments follow: residues 17–37 (AVRI…LVGG), 107–127 (VIGI…AIGP), 132–152 (ALWG…WMVA), 164–184 (VRLA…VWTL), 203–223 (AIAL…VAGL), 264–283 (QFDH…WHAI), 296–316 (GALW…LTVL), and 320–340 (PIGL…LAVL). His267 serves as a coordination point for heme. His327 provides a ligand contact to heme.

Belongs to the COX15/CtaA family. Type 2 subfamily. In terms of assembly, interacts with CtaB. The cofactor is heme b.

The protein localises to the cell membrane. It carries out the reaction Fe(II)-heme o + 2 A + H2O = Fe(II)-heme a + 2 AH2. Its pathway is porphyrin-containing compound metabolism; heme A biosynthesis; heme A from heme O: step 1/1. In terms of biological role, catalyzes the conversion of heme O to heme A by two successive hydroxylations of the methyl group at C8. The first hydroxylation forms heme I, the second hydroxylation results in an unstable dihydroxymethyl group, which spontaneously dehydrates, resulting in the formyl group of heme A. The chain is Heme A synthase from Rhodopseudomonas palustris (strain HaA2).